Here is a 471-residue protein sequence, read N- to C-terminus: GDP-mannose transporter (471 aa).

Positions 1–13 (MSSGSRSFFTPQE) are enriched in polar residues. The segment at 1-52 (MSSGSRSFFTPQETRLELPQGAAHQTPDITRPASPSENDRAPFLNGGPSDAR) is disordered. The Cytoplasmic portion of the chain corresponds to 1–70 (MSSGSRSFFT…ALRNDSEKPA (70 aa)). The chain crosses the membrane as a helical span at residues 71 to 91 (VGIMALAPILCYCAASITMTV). Topologically, residues 92-101 (VNKFTVSGRG) are lumenal. The helical transmembrane segment at 102–122 (FNMNLLVLLIQSTVGVTCVWI) threads the bilayer. The Cytoplasmic segment spans residues 123–139 (AERAGLIQLRGLNAKDA). Residues 140-160 (WNWMPLSIMLVFVIWTGSKAL) traverse the membrane as a helical segment. Residues 161-166 (QYLNIS) are Lumenal-facing. Asn164 carries N-linked (GlcNAc...) asparagine glycosylation. The chain crosses the membrane as a helical span at residues 167 to 187 (VYTIFKNLTIILIAYGEVMWF). Topologically, residues 188–193 (GGRVTR) are cytoplasmic. The chain crosses the membrane as a helical span at residues 194–214 (IVLCSFLFMVLSSVIAAWSDI). Topologically, residues 215-279 (SNVFAIGNLS…DVIEGFQGYG (65 aa)) are lumenal. The N-linked (GlcNAc...) asparagine glycan is linked to Asn222. The chain crosses the membrane as a helical span at residues 280-300 (LLSSGYVWMALNCICSATYVL). Residues 301-315 (LMRKRIKVTGFKDWD) are Cytoplasmic-facing. The helical transmembrane segment at 316-336 (TMFYNNFLSIPVLLLMSFLVE) threads the bilayer. The Lumenal portion of the chain corresponds to 337–354 (DWSYANLHKNFPDDKQTK). The chain crosses the membrane as a helical span at residues 355-375 (LISAIVFSGACAILISYTTAW). Residues 376–383 (CIRATSST) are Cytoplasmic-facing. A helical membrane pass occupies residues 384–404 (TYSMVGALNKLPVALSGMVFF). At 405 to 408 (HDPP) the chain is on the lumenal side. Residues 409–429 (VTFSSVSAIAVGFFAGLVYAF) form a helical membrane-spanning segment. The Cytoplasmic portion of the chain corresponds to 430–471 (GKNKQAEAAKLGGHASANGSSSMSGSKDGSSLPMHTFNDRKD). A compositionally biased stretch (low complexity) spans 442 to 460 (GHASANGSSSMSGSKDGSS). Residues 442 to 471 (GHASANGSSSMSGSKDGSSLPMHTFNDRKD) form a disordered region.

The protein belongs to the TPT transporter family. SLC35D subfamily. In terms of assembly, homooligomer.

It is found in the golgi apparatus membrane. The protein localises to the cytoplasmic vesicle membrane. The protein resides in the endoplasmic reticulum membrane. Involved in the import of GDP-mannose from the cytoplasm into the Golgi lumen. The sequence is that of GDP-mannose transporter (VRG4) from Mycosarcoma maydis (Corn smut fungus).